The sequence spans 660 residues: DNA ligase (660 aa).

NAD(+)-binding positions include 33-37 (DFVYD), 82-83 (SL), and glutamate 110. Lysine 112 functions as the N6-AMP-lysine intermediate in the catalytic mechanism. Residues arginine 133, glutamate 167, lysine 281, and lysine 305 each coordinate NAD(+). Cysteine 396, cysteine 399, cysteine 412, and cysteine 417 together coordinate Zn(2+). One can recognise a BRCT domain in the interval 583–660 (DENRLLAGKK…SFEDIKSYLN (78 aa)).

This sequence belongs to the NAD-dependent DNA ligase family. LigA subfamily. Mg(2+) is required as a cofactor. Requires Mn(2+) as cofactor.

It carries out the reaction NAD(+) + (deoxyribonucleotide)n-3'-hydroxyl + 5'-phospho-(deoxyribonucleotide)m = (deoxyribonucleotide)n+m + AMP + beta-nicotinamide D-nucleotide.. Functionally, DNA ligase that catalyzes the formation of phosphodiester linkages between 5'-phosphoryl and 3'-hydroxyl groups in double-stranded DNA using NAD as a coenzyme and as the energy source for the reaction. It is essential for DNA replication and repair of damaged DNA. The polypeptide is DNA ligase (Borrelia garinii subsp. bavariensis (strain ATCC BAA-2496 / DSM 23469 / PBi) (Borreliella bavariensis)).